A 143-amino-acid polypeptide reads, in one-letter code: Aspartate 1-decarboxylase (143 aa).

Catalysis depends on Ser-25, which acts as the Schiff-base intermediate with substrate; via pyruvic acid. Residue Ser-25 is modified to Pyruvic acid (Ser). Substrate is bound at residue Thr-57. The active-site Proton donor is the Tyr-58. Gly-73 to Ala-75 is a binding site for substrate.

Belongs to the PanD family. In terms of assembly, heterooctamer of four alpha and four beta subunits. It depends on pyruvate as a cofactor. In terms of processing, is synthesized initially as an inactive proenzyme, which is activated by self-cleavage at a specific serine bond to produce a beta-subunit with a hydroxyl group at its C-terminus and an alpha-subunit with a pyruvoyl group at its N-terminus.

It is found in the cytoplasm. It catalyses the reaction L-aspartate + H(+) = beta-alanine + CO2. The protein operates within cofactor biosynthesis; (R)-pantothenate biosynthesis; beta-alanine from L-aspartate: step 1/1. In terms of biological role, catalyzes the pyruvoyl-dependent decarboxylation of aspartate to produce beta-alanine. This Mycobacterium ulcerans (strain Agy99) protein is Aspartate 1-decarboxylase.